The primary structure comprises 359 residues: ATP-dependent (S)-NAD(P)H-hydrate dehydratase (359 aa).

Residues 61–350 (LLEEARKVVP…SEINSVFVNN (290 aa)) form the YjeF C-terminal domain. (6S)-NADPHX-binding positions include G161 and 214 to 220 (NVVEFQR). ATP contacts are provided by residues 256–260 (KGEVD) and 275–284 (GSPRRCGGQG). D285 contacts (6S)-NADPHX.

This sequence belongs to the NnrD/CARKD family. It depends on Mg(2+) as a cofactor.

The enzyme catalyses (6S)-NADHX + ATP = ADP + phosphate + NADH + H(+). It catalyses the reaction (6S)-NADPHX + ATP = ADP + phosphate + NADPH + H(+). Functionally, catalyzes the dehydration of the S-form of NAD(P)HX at the expense of ATP, which is converted to ADP. Together with NAD(P)HX epimerase, which catalyzes the epimerization of the S- and R-forms, the enzyme allows the repair of both epimers of NAD(P)HX, a damaged form of NAD(P)H that is a result of enzymatic or heat-dependent hydration. This chain is ATP-dependent (S)-NAD(P)H-hydrate dehydratase, found in Ciona intestinalis (Transparent sea squirt).